A 370-amino-acid polypeptide reads, in one-letter code: 4-hydroxy-3-methylbut-2-en-1-yl diphosphate synthase (flavodoxin) (370 aa).

Positions 270, 273, 305, and 312 each coordinate [4Fe-4S] cluster.

The protein belongs to the IspG family. Requires [4Fe-4S] cluster as cofactor.

The catalysed reaction is (2E)-4-hydroxy-3-methylbut-2-enyl diphosphate + oxidized [flavodoxin] + H2O + 2 H(+) = 2-C-methyl-D-erythritol 2,4-cyclic diphosphate + reduced [flavodoxin]. It participates in isoprenoid biosynthesis; isopentenyl diphosphate biosynthesis via DXP pathway; isopentenyl diphosphate from 1-deoxy-D-xylulose 5-phosphate: step 5/6. Functionally, converts 2C-methyl-D-erythritol 2,4-cyclodiphosphate (ME-2,4cPP) into 1-hydroxy-2-methyl-2-(E)-butenyl 4-diphosphate. This Azotobacter vinelandii (strain DJ / ATCC BAA-1303) protein is 4-hydroxy-3-methylbut-2-en-1-yl diphosphate synthase (flavodoxin).